The chain runs to 549 residues: Chaperonin GroEL (549 aa).

Residues T30 to P33, K51, D87 to T91, G415, N479 to A481, and D495 contribute to the ATP site.

The protein belongs to the chaperonin (HSP60) family. As to quaternary structure, forms a cylinder of 14 subunits composed of two heptameric rings stacked back-to-back. Interacts with the co-chaperonin GroES.

Its subcellular location is the cytoplasm. The catalysed reaction is ATP + H2O + a folded polypeptide = ADP + phosphate + an unfolded polypeptide.. Its function is as follows. Together with its co-chaperonin GroES, plays an essential role in assisting protein folding. The GroEL-GroES system forms a nano-cage that allows encapsulation of the non-native substrate proteins and provides a physical environment optimized to promote and accelerate protein folding. The polypeptide is Chaperonin GroEL (Leptothrix cholodnii (strain ATCC 51168 / LMG 8142 / SP-6) (Leptothrix discophora (strain SP-6))).